We begin with the raw amino-acid sequence, 76 residues long: Exodeoxyribonuclease 7 small subunit (76 aa).

It belongs to the XseB family. In terms of assembly, heterooligomer composed of large and small subunits.

It localises to the cytoplasm. It catalyses the reaction Exonucleolytic cleavage in either 5'- to 3'- or 3'- to 5'-direction to yield nucleoside 5'-phosphates.. In terms of biological role, bidirectionally degrades single-stranded DNA into large acid-insoluble oligonucleotides, which are then degraded further into small acid-soluble oligonucleotides. The sequence is that of Exodeoxyribonuclease 7 small subunit from Bacillus cereus (strain ATCC 14579 / DSM 31 / CCUG 7414 / JCM 2152 / NBRC 15305 / NCIMB 9373 / NCTC 2599 / NRRL B-3711).